A 457-amino-acid chain; its full sequence is Bifunctional protein GlmU (457 aa).

Residues Met1–Arg229 are pyrophosphorylase. UDP-N-acetyl-alpha-D-glucosamine is bound by residues Leu8–Gly11, Lys22, Gln73, and Gly78–Thr79. Asp103 is a binding site for Mg(2+). 4 residues coordinate UDP-N-acetyl-alpha-D-glucosamine: Gly140, Glu155, Asn170, and Asn227. Asn227 contributes to the Mg(2+) binding site. Positions Val230–Asn250 are linker. The tract at residues Gly251–Lys457 is N-acetyltransferase. Residues Arg332 and Lys350 each coordinate UDP-N-acetyl-alpha-D-glucosamine. The active-site Proton acceptor is His362. The UDP-N-acetyl-alpha-D-glucosamine site is built by Tyr365 and Asn376. Acetyl-CoA contacts are provided by residues Asn385–Tyr386, Ala422, and Arg439.

This sequence in the N-terminal section; belongs to the N-acetylglucosamine-1-phosphate uridyltransferase family. It in the C-terminal section; belongs to the transferase hexapeptide repeat family. As to quaternary structure, homotrimer. Mg(2+) serves as cofactor.

The protein resides in the cytoplasm. The enzyme catalyses alpha-D-glucosamine 1-phosphate + acetyl-CoA = N-acetyl-alpha-D-glucosamine 1-phosphate + CoA + H(+). It carries out the reaction N-acetyl-alpha-D-glucosamine 1-phosphate + UTP + H(+) = UDP-N-acetyl-alpha-D-glucosamine + diphosphate. Its pathway is nucleotide-sugar biosynthesis; UDP-N-acetyl-alpha-D-glucosamine biosynthesis; N-acetyl-alpha-D-glucosamine 1-phosphate from alpha-D-glucosamine 6-phosphate (route II): step 2/2. It functions in the pathway nucleotide-sugar biosynthesis; UDP-N-acetyl-alpha-D-glucosamine biosynthesis; UDP-N-acetyl-alpha-D-glucosamine from N-acetyl-alpha-D-glucosamine 1-phosphate: step 1/1. The protein operates within bacterial outer membrane biogenesis; LPS lipid A biosynthesis. In terms of biological role, catalyzes the last two sequential reactions in the de novo biosynthetic pathway for UDP-N-acetylglucosamine (UDP-GlcNAc). The C-terminal domain catalyzes the transfer of acetyl group from acetyl coenzyme A to glucosamine-1-phosphate (GlcN-1-P) to produce N-acetylglucosamine-1-phosphate (GlcNAc-1-P), which is converted into UDP-GlcNAc by the transfer of uridine 5-monophosphate (from uridine 5-triphosphate), a reaction catalyzed by the N-terminal domain. The polypeptide is Bifunctional protein GlmU (Clostridium botulinum (strain ATCC 19397 / Type A)).